Consider the following 1340-residue polypeptide: Protein SHORT ROOT IN SALT MEDIUM 1 (1340 aa).

Disordered stretches follow at residues 1-73 (MHRD…RSHL), 161-185 (YGEQ…ADPS), 357-473 (EEER…IRRS), 723-750 (TVEV…KKTV), 784-990 (PETT…PPRA), and 1063-1269 (RNQR…KREE). Low complexity predominate over residues 7-39 (SSRGTGYGQQQYGSQSGYSQNLGSGYPGSSVSG). The segment covering 46 to 60 (QISLSSRHPSITGAP) has biased composition (polar residues). Composition is skewed to basic and acidic residues over residues 173–182 (LQNEPTRRYA), 357–470 (EEER…EASI), and 723–735 (TVEV…KKSP). A coiled-coil region spans residues 355 to 426 (LREEERRRED…RERKRALEIK (72 aa)). A compositionally biased stretch (polar residues) spans 810 to 824 (GDTSDPSAKANEQTP). A compositionally biased stretch (basic residues) spans 828 to 840 (IVKKKIIKRVAKR). Composition is skewed to basic and acidic residues over residues 841–872 (KVAE…KKSS), 887–988 (EDVK…EEPP), 1069–1097 (HQEE…DKEA), and 1105–1138 (PGKD…ETLG). The stretch at 1052 to 1086 (LKKLRVKIVRQRNQRKRHQEELSVKQNEAKSQDKR) forms a coiled coil. Residues 1153–1204 (ENQDEEDDDGDDDPEEDPEEDPEEDPEEDPEEDPEECEEMDVANTEQEEPAE) show a composition bias toward acidic residues. 2 stretches are compositionally biased toward basic and acidic residues: residues 1205 to 1214 (EPQKKEENLE) and 1229 to 1257 (TDNR…HGKQ). An EF-hand domain is found at 1270–1305 (TVDKELLQAFRFFDRNQAGYVRVEDMRVTIHSLGKF).

As to quaternary structure, interacts with BHLH148/RITF1. As to expression, expressed ubiquitously at high levels, including in guard cells.

The protein resides in the nucleus. Functionally, required for salt tolerance and sodium (Na) homeostasis after salt stress. Together with BHLH148/RITF1, regulates the transcription of several genes involved in the detoxification of reactive oxygen species (ROS) generated by salt (NaCl) stress. Binds calcium. The chain is Protein SHORT ROOT IN SALT MEDIUM 1 from Arabidopsis thaliana (Mouse-ear cress).